The following is a 204-amino-acid chain: Transcription initiation factor TFIID subunit 11b (204 aa).

Residues 38 to 60 (PFEAAMEEQEESPVETEQTLEGD) are disordered. The span at 42–58 (AMEEQEESPVETEQTLE) shows a compositional bias: acidic residues. One can recognise a Histone-fold domain in the interval 106–195 (FTEEQMSRYE…RRLKLQGKVP (90 aa)).

It belongs to the TAF11 family. In terms of assembly, component of the TFIID complex. TFIID is composed of TATA binding protein (TBP) and a number of TBP-associated factors (TAFs) whose MWs range from 14-217 kDa. As to expression, expressed in roots, leaves and inflorescences.

It is found in the nucleus. In terms of biological role, TAFs are components of the transcription factor IID (TFIID) complex that is essential for mediating regulation of RNA polymerase transcription. The sequence is that of Transcription initiation factor TFIID subunit 11b (TAF11B) from Arabidopsis thaliana (Mouse-ear cress).